The primary structure comprises 196 residues: Protein GrpE (196 aa).

A disordered region spans residues 1–40; the sequence is MSSKEQKTPEGQAPEEIIMDQHEEVEAVEPNDSAEQVDPR.

It belongs to the GrpE family. Homodimer.

Its subcellular location is the cytoplasm. In terms of biological role, participates actively in the response to hyperosmotic and heat shock by preventing the aggregation of stress-denatured proteins, in association with DnaK and GrpE. It is the nucleotide exchange factor for DnaK and may function as a thermosensor. Unfolded proteins bind initially to DnaJ; upon interaction with the DnaJ-bound protein, DnaK hydrolyzes its bound ATP, resulting in the formation of a stable complex. GrpE releases ADP from DnaK; ATP binding to DnaK triggers the release of the substrate protein, thus completing the reaction cycle. Several rounds of ATP-dependent interactions between DnaJ, DnaK and GrpE are required for fully efficient folding. This is Protein GrpE from Salmonella enteritidis PT4 (strain P125109).